A 507-amino-acid polypeptide reads, in one-letter code: UDP-N-acetylglucosamine 1-carboxyvinyltransferase 1 (507 aa).

41-42 (KN) serves as a coordination point for phosphoenolpyruvate. Residue Arg112 participates in UDP-N-acetyl-alpha-D-glucosamine binding. Cys136 serves as the catalytic Proton donor. Cys136 carries the post-translational modification 2-(S-cysteinyl)pyruvic acid O-phosphothioketal. UDP-N-acetyl-alpha-D-glucosamine-binding positions include 141-145 (RPIDL), Asp328, and Leu350.

It belongs to the EPSP synthase family. MurA subfamily.

The protein localises to the cytoplasm. The catalysed reaction is phosphoenolpyruvate + UDP-N-acetyl-alpha-D-glucosamine = UDP-N-acetyl-3-O-(1-carboxyvinyl)-alpha-D-glucosamine + phosphate. The protein operates within cell wall biogenesis; peptidoglycan biosynthesis. Functionally, cell wall formation. Adds enolpyruvyl to UDP-N-acetylglucosamine. This is UDP-N-acetylglucosamine 1-carboxyvinyltransferase 1 from Legionella pneumophila (strain Lens).